The chain runs to 243 residues: Ribonuclease 3 (243 aa).

One can recognise an RNase III domain in the interval 15-144 (NDTISKIINY…LIGAIYIDGG (130 aa)). Mg(2+) is bound at residue Glu57. The active site involves Asp61. Residues Asn130 and Glu133 each coordinate Mg(2+). Glu133 is an active-site residue. One can recognise a DRBM domain in the interval 169-238 (DPKTSLQEWT…AELMLEKINN (70 aa)).

It belongs to the ribonuclease III family. Homodimer. The cofactor is Mg(2+).

The protein resides in the cytoplasm. It catalyses the reaction Endonucleolytic cleavage to 5'-phosphomonoester.. Its function is as follows. Digests double-stranded RNA. Involved in the processing of primary rRNA transcript to yield the immediate precursors to the large and small rRNAs (23S and 16S). Processes some mRNAs, and tRNAs when they are encoded in the rRNA operon. Processes pre-crRNA and tracrRNA of type II CRISPR loci if present in the organism. In Wolbachia sp. subsp. Brugia malayi (strain TRS), this protein is Ribonuclease 3.